The following is a 160-amino-acid chain: Xanthine-guanine phosphoribosyltransferase (160 aa).

Residues 41–42 (RG) and 93–101 (DDLVDTGRT) each bind 5-phospho-alpha-D-ribose 1-diphosphate. D94 contacts Mg(2+). Residues D97 and I140 each contribute to the guanine site. Xanthine-binding residues include D97 and I140. GMP-binding positions include 97–101 (DTGRT) and 139–140 (WI).

This sequence belongs to the purine/pyrimidine phosphoribosyltransferase family. XGPT subfamily. Homotetramer. It depends on Mg(2+) as a cofactor.

It localises to the cell inner membrane. The catalysed reaction is GMP + diphosphate = guanine + 5-phospho-alpha-D-ribose 1-diphosphate. The enzyme catalyses XMP + diphosphate = xanthine + 5-phospho-alpha-D-ribose 1-diphosphate. It carries out the reaction IMP + diphosphate = hypoxanthine + 5-phospho-alpha-D-ribose 1-diphosphate. It participates in purine metabolism; GMP biosynthesis via salvage pathway; GMP from guanine: step 1/1. Its pathway is purine metabolism; XMP biosynthesis via salvage pathway; XMP from xanthine: step 1/1. Purine salvage pathway enzyme that catalyzes the transfer of the ribosyl-5-phosphate group from 5-phospho-alpha-D-ribose 1-diphosphate (PRPP) to the N9 position of the 6-oxopurines guanine and xanthine to form the corresponding ribonucleotides GMP (guanosine 5'-monophosphate) and XMP (xanthosine 5'-monophosphate), with the release of PPi. To a lesser extent, also acts on hypoxanthine. This Desulfotalea psychrophila (strain LSv54 / DSM 12343) protein is Xanthine-guanine phosphoribosyltransferase.